We begin with the raw amino-acid sequence, 381 residues long: Malonyl-CoA-acyl carrier protein transacylase, mitochondrial (381 aa).

Catalysis depends on residues Ser-151 and His-268. Lys-312 carries the N6-succinyllysine modification.

This sequence belongs to the type II malonyltransferase family. Expressed in retinal ganglion cells.

It is found in the mitochondrion. The enzyme catalyses holo-[ACP] + malonyl-CoA = malonyl-[ACP] + CoA. The protein operates within lipid metabolism; fatty acid biosynthesis. Its function is as follows. Catalyzes the transfer of a malonyl moiety from malonyl-CoA to the free thiol group of the phosphopantetheine arm of the mitochondrial ACP protein (NDUFAB1). This suggests the existence of the biosynthesis of fatty acids in mitochondria. This Mus musculus (Mouse) protein is Malonyl-CoA-acyl carrier protein transacylase, mitochondrial.